The primary structure comprises 492 residues: Protein adenylyltransferase Fic (492 aa).

Residues M1–Q17 are compositionally biased toward low complexity. The interval M1–A25 is disordered. The helical transmembrane segment at L33–S55 threads the bilayer. 2 TPR repeats span residues A118–H151 and P152–N186. Residues S243 to G248 carry the Inhibitory (S/T)XXXE(G/N) motif motif. ATP contacts are provided by residues E247 and V328–H331. Residues I297 to D432 enclose the Fido domain. H375 is an active-site residue. ATP is bound by residues D379–R386, Y411–Y412, and N419.

This sequence belongs to the fic family. As to quaternary structure, homodimer.

The protein resides in the membrane. It carries out the reaction L-tyrosyl-[protein] + ATP = O-(5'-adenylyl)-L-tyrosyl-[protein] + diphosphate. It catalyses the reaction L-threonyl-[protein] + ATP = 3-O-(5'-adenylyl)-L-threonyl-[protein] + diphosphate. The catalysed reaction is 3-O-(5'-adenylyl)-L-threonyl-[protein] + H2O = L-threonyl-[protein] + AMP + H(+). Its activity is regulated as follows. The side chain of Glu-247 determines which of the two opposing activities (AMPylase or de-AMPylase) will take place. In response to endoplasmic reticulum stress, mediates de-AMPylase activity. Adenylyltransferase activity is inhibited by the inhibitory helix present at the N-terminus: Glu-247 binds ATP and competes with ATP-binding at Arg-386, thereby preventing adenylyltransferase activity. In unstressed cells, disengagement of Glu-247 promotes adenylyltransferase activity. Activation dissociates ATP-binding from Glu-247, allowing ordered binding of the entire ATP moiety with the alpha-phosphate in an orientation that is productive for accepting an incoming target hydroxyl side chain. Protein that can both mediate the addition of adenosine 5'-monophosphate (AMP) to specific residues of target proteins (AMPylation), and the removal of the same modification from target proteins (de-AMPylation), depending on the context. The side chain of Glu-247 determines which of the two opposing activities (AMPylase or de-AMPylase) will take place. Acts as a key regulator of the unfolded protein response (UPR) by mediating AMPylation or de-AMPylation of Hsc70-3/BiP. In unstressed cells, acts as an adenylyltransferase by mediating AMPylation of Hsc70-3/BiP at 'Thr-518', thereby inactivating it. In response to endoplasmic reticulum stress, acts as a phosphodiesterase by mediating removal of ATP (de-AMPylation) from Hsc70-3/BiP at 'Thr-518', leading to restore HSPA5/BiP activity. In Drosophila sechellia (Fruit fly), this protein is Protein adenylyltransferase Fic.